The primary structure comprises 214 residues: Phosphatidylserine decarboxylase proenzyme (214 aa).

The active-site Schiff-base intermediate with substrate; via pyruvic acid is the serine 182. Pyruvic acid (Ser); by autocatalysis is present on serine 182.

This sequence belongs to the phosphatidylserine decarboxylase family. PSD-A subfamily. In terms of assembly, heterodimer of a large membrane-associated beta subunit and a small pyruvoyl-containing alpha subunit. Pyruvate serves as cofactor. In terms of processing, is synthesized initially as an inactive proenzyme. Formation of the active enzyme involves a self-maturation process in which the active site pyruvoyl group is generated from an internal serine residue via an autocatalytic post-translational modification. Two non-identical subunits are generated from the proenzyme in this reaction, and the pyruvate is formed at the N-terminus of the alpha chain, which is derived from the carboxyl end of the proenzyme. The post-translation cleavage follows an unusual pathway, termed non-hydrolytic serinolysis, in which the side chain hydroxyl group of the serine supplies its oxygen atom to form the C-terminus of the beta chain, while the remainder of the serine residue undergoes an oxidative deamination to produce ammonia and the pyruvoyl prosthetic group on the alpha chain.

Its subcellular location is the cell membrane. The catalysed reaction is a 1,2-diacyl-sn-glycero-3-phospho-L-serine + H(+) = a 1,2-diacyl-sn-glycero-3-phosphoethanolamine + CO2. It functions in the pathway phospholipid metabolism; phosphatidylethanolamine biosynthesis; phosphatidylethanolamine from CDP-diacylglycerol: step 2/2. Functionally, catalyzes the formation of phosphatidylethanolamine (PtdEtn) from phosphatidylserine (PtdSer). This Burkholderia multivorans (strain ATCC 17616 / 249) protein is Phosphatidylserine decarboxylase proenzyme.